A 163-amino-acid chain; its full sequence is ECF RNA polymerase sigma factor SigM (163 aa).

Positions 30-43 (DLLQETFMRAYIHI) match the Polymerase core binding motif. Positions 127 to 146 (YKEASHIMNISEANFKSVLF) form a DNA-binding region, H-T-H motif.

It belongs to the sigma-70 factor family. ECF subfamily. Interacts with the N-terminus of YhdL, which is probably its anti-sigma factor. Interacts transiently with the RNAP core.

Functionally, sigma factors are initiation factors that promote the attachment of RNA polymerase (RNAP) to specific initiation sites and are then released. Extracytoplasmic function (ECF) sigma factors are held in an inactive form by a cognate anti-sigma factor (YhdL) until released. This sigma factor is involved in the maintenance of membrane and cell wall integrity in response to environmental stresses including salt, acid, ethanol and antibiotics stress. Partially regulates transcription from a number of genes including disA. Associates with RNAP core under all growth phases. The sequence is that of ECF RNA polymerase sigma factor SigM (sigM) from Bacillus subtilis (strain 168).